We begin with the raw amino-acid sequence, 89 residues long: Small ribosomal subunit protein uS14 (89 aa).

Belongs to the universal ribosomal protein uS14 family. Part of the 30S ribosomal subunit. Contacts proteins S3 and S10.

Binds 16S rRNA, required for the assembly of 30S particles and may also be responsible for determining the conformation of the 16S rRNA at the A site. The chain is Small ribosomal subunit protein uS14 from Chlorobium phaeovibrioides (strain DSM 265 / 1930) (Prosthecochloris vibrioformis (strain DSM 265)).